The following is a 226-amino-acid chain: NEDD8-specific protease 1 (226 aa).

This sequence belongs to the peptidase C48 family.

Processes the pre-form of the ubiquitin-like protein NEDD8/RUB1. Has the capacity to discriminate between NEDD8/RUB1 and ubiquitin. Has no SUMO protease activity. In Arabidopsis thaliana (Mouse-ear cress), this protein is NEDD8-specific protease 1 (NEDP1).